A 189-amino-acid polypeptide reads, in one-letter code: Small ribosomal subunit protein uS4 (189 aa).

The region spanning 107–178 is the S4 RNA-binding domain; that stretch reads RRLQTQVFKL…AGRVKRKNQG (72 aa). Residues 160–189 are disordered; sequence HNSPYGGGRAGRVKRKNQGKGGEEGAEEEE.

The protein belongs to the universal ribosomal protein uS4 family. In terms of assembly, component of the small ribosomal subunit. Mature ribosomes consist of a small (40S) and a large (60S) subunit. The 40S subunit contains about 32 different proteins and 1 molecule of RNA (18S). The 60S subunit contains 45 different proteins and 3 molecules of RNA (25S, 5.8S and 5S).

It is found in the cytoplasm. In terms of biological role, component of the ribosome, a large ribonucleoprotein complex responsible for the synthesis of proteins in the cell. The small ribosomal subunit (SSU) binds messenger RNAs (mRNAs) and translates the encoded message by selecting cognate aminoacyl-transfer RNA (tRNA) molecules. The large subunit (LSU) contains the ribosomal catalytic site termed the peptidyl transferase center (PTC), which catalyzes the formation of peptide bonds, thereby polymerizing the amino acids delivered by tRNAs into a polypeptide chain. The nascent polypeptides leave the ribosome through a tunnel in the LSU and interact with protein factors that function in enzymatic processing, targeting, and the membrane insertion of nascent chains at the exit of the ribosomal tunnel. RPS9B is involved in nucleolar processing of pre-18S ribosomal RNA and ribosome assembly. The chain is Small ribosomal subunit protein uS4 (RPS9B) from Candida albicans (strain SC5314 / ATCC MYA-2876) (Yeast).